A 318-amino-acid polypeptide reads, in one-letter code: Ankyrin repeat and SOCS box protein 7 (318 aa).

ANK repeat units follow at residues 13 to 42 (QEEL…SPNG), 46 to 75 (NGWT…DPTV), 80 to 109 (GGFT…RSDI), 116 to 145 (DGWT…EVDP), 149 to 178 (KGTT…NIDI), 180 to 208 (NGFL…DTDL), and 213 to 242 (DGQT…DTNT). The 54-residue stretch at 265-318 (LDFLQEVTRQPRNLQDLCRIKIRQCIGLQNLKLLDELPIAKVMKDYLKHKFDDI) folds into the SOCS box domain.

This sequence belongs to the ankyrin SOCS box (ASB) family. As to quaternary structure, interacts with CUL5. Interacts with RNF7. Interacts with PSRC1.

It functions in the pathway protein modification; protein ubiquitination. Probable substrate-recognition component of a SCF-like ECS (Elongin-Cullin-SOCS-box protein) E3 ubiquitin-protein ligase complex which mediates the ubiquitination and subsequent proteasomal degradation of target proteins. Plays a role in spindle dynamics and genome integrity by targeting the mitotic progression protein PSRC1 for proteasomal degradation in a cell cycle-dependent manner. Also participates in meiosis by mediating the proper attachment between kinetochores and microtubules. In Macaca fascicularis (Crab-eating macaque), this protein is Ankyrin repeat and SOCS box protein 7 (ASB7).